A 405-amino-acid polypeptide reads, in one-letter code: Tryptophan synthase beta chain (405 aa).

At Lys98 the chain carries N6-(pyridoxal phosphate)lysine.

It belongs to the TrpB family. As to quaternary structure, tetramer of two alpha and two beta chains. Pyridoxal 5'-phosphate serves as cofactor.

The enzyme catalyses (1S,2R)-1-C-(indol-3-yl)glycerol 3-phosphate + L-serine = D-glyceraldehyde 3-phosphate + L-tryptophan + H2O. The protein operates within amino-acid biosynthesis; L-tryptophan biosynthesis; L-tryptophan from chorismate: step 5/5. Functionally, the beta subunit is responsible for the synthesis of L-tryptophan from indole and L-serine. This chain is Tryptophan synthase beta chain, found in Xylella fastidiosa (strain M12).